The following is a 236-amino-acid chain: NAD(P)H-hydrate epimerase (236 aa).

Residues 11-217 (AAALDQELMS…AIASKYGFEV (207 aa)) enclose the YjeF N-terminal domain. 61–65 (NNGGD) contributes to the (6S)-NADPHX binding site. The K(+) site is built by N62 and D123. Residues 127-133 (GFSFSGE) and D156 contribute to the (6S)-NADPHX site. S159 contacts K(+).

It belongs to the NnrE/AIBP family. Requires K(+) as cofactor.

Its subcellular location is the cytoplasm. It localises to the mitochondrion. It carries out the reaction (6R)-NADHX = (6S)-NADHX. The enzyme catalyses (6R)-NADPHX = (6S)-NADPHX. Functionally, catalyzes the epimerization of the S- and R-forms of NAD(P)HX, a damaged form of NAD(P)H that is a result of enzymatic or heat-dependent hydration. This is a prerequisite for the S-specific NAD(P)H-hydrate dehydratase to allow the repair of both epimers of NAD(P)HX. This is NAD(P)H-hydrate epimerase from Fusarium vanettenii (strain ATCC MYA-4622 / CBS 123669 / FGSC 9596 / NRRL 45880 / 77-13-4) (Fusarium solani subsp. pisi).